The following is a 195-amino-acid chain: Imidazoleglycerol-phosphate dehydratase (195 aa).

It belongs to the imidazoleglycerol-phosphate dehydratase family.

It is found in the cytoplasm. It catalyses the reaction D-erythro-1-(imidazol-4-yl)glycerol 3-phosphate = 3-(imidazol-4-yl)-2-oxopropyl phosphate + H2O. It participates in amino-acid biosynthesis; L-histidine biosynthesis; L-histidine from 5-phospho-alpha-D-ribose 1-diphosphate: step 6/9. The polypeptide is Imidazoleglycerol-phosphate dehydratase (Thermotoga neapolitana (strain ATCC 49049 / DSM 4359 / NBRC 107923 / NS-E)).